The chain runs to 274 residues: ATP synthase subunit b 2 (274 aa).

The helical transmembrane segment at 2–22 threads the bilayer; the sequence is HIDWFVLLAQLVNFLILIYLL.

It belongs to the ATPase B chain family. In terms of assembly, F-type ATPases have 2 components, F(1) - the catalytic core - and F(0) - the membrane proton channel. F(1) has five subunits: alpha(3), beta(3), gamma(1), delta(1), epsilon(1). F(0) has three main subunits: a(1), b(2) and c(10-14). The alpha and beta chains form an alternating ring which encloses part of the gamma chain. F(1) is attached to F(0) by a central stalk formed by the gamma and epsilon chains, while a peripheral stalk is formed by the delta and b chains.

It is found in the cell inner membrane. Functionally, f(1)F(0) ATP synthase produces ATP from ADP in the presence of a proton or sodium gradient. F-type ATPases consist of two structural domains, F(1) containing the extramembraneous catalytic core and F(0) containing the membrane proton channel, linked together by a central stalk and a peripheral stalk. During catalysis, ATP synthesis in the catalytic domain of F(1) is coupled via a rotary mechanism of the central stalk subunits to proton translocation. Its function is as follows. Component of the F(0) channel, it forms part of the peripheral stalk, linking F(1) to F(0). The polypeptide is ATP synthase subunit b 2 (Syntrophus aciditrophicus (strain SB)).